The following is a 312-amino-acid chain: Protoheme IX farnesyltransferase (312 aa).

9 consecutive transmembrane segments (helical) span residues 29 to 49 (VMSL…GHMN), 50 to 70 (PVLA…SGAL), 90 to 110 (IPAG…LSAF), 117 to 137 (LMVN…YAVI), 150 to 170 (IVIG…AATG), 177 to 197 (LVLF…LSLF), 223 to 243 (ALFY…MGFA), 246 to 266 (FYGV…WRLW), and 292 to 312 (IFAV…FGVF).

This sequence belongs to the UbiA prenyltransferase family. Protoheme IX farnesyltransferase subfamily.

Its subcellular location is the cell inner membrane. It catalyses the reaction heme b + (2E,6E)-farnesyl diphosphate + H2O = Fe(II)-heme o + diphosphate. Its pathway is porphyrin-containing compound metabolism; heme O biosynthesis; heme O from protoheme: step 1/1. In terms of biological role, converts heme B (protoheme IX) to heme O by substitution of the vinyl group on carbon 2 of heme B porphyrin ring with a hydroxyethyl farnesyl side group. This chain is Protoheme IX farnesyltransferase, found in Brucella melitensis biotype 1 (strain ATCC 23456 / CCUG 17765 / NCTC 10094 / 16M).